The sequence spans 77 residues: NAD(P)H-quinone oxidoreductase subunit L (77 aa).

2 helical membrane passes run 10–30 (LLIA…LPAG) and 48–68 (LVMY…SPFL).

Belongs to the complex I NdhL subunit family. In terms of assembly, NDH-1 can be composed of about 15 different subunits; different subcomplexes with different compositions have been identified which probably have different functions.

It is found in the cellular thylakoid membrane. It catalyses the reaction a plastoquinone + NADH + (n+1) H(+)(in) = a plastoquinol + NAD(+) + n H(+)(out). It carries out the reaction a plastoquinone + NADPH + (n+1) H(+)(in) = a plastoquinol + NADP(+) + n H(+)(out). In terms of biological role, NDH-1 shuttles electrons from an unknown electron donor, via FMN and iron-sulfur (Fe-S) centers, to quinones in the respiratory and/or the photosynthetic chain. The immediate electron acceptor for the enzyme in this species is believed to be plastoquinone. Couples the redox reaction to proton translocation, and thus conserves the redox energy in a proton gradient. Cyanobacterial NDH-1 also plays a role in inorganic carbon-concentration. The protein is NAD(P)H-quinone oxidoreductase subunit L of Picosynechococcus sp. (strain ATCC 27264 / PCC 7002 / PR-6) (Agmenellum quadruplicatum).